We begin with the raw amino-acid sequence, 335 residues long: UPF0353 protein NFA_34780 (335 aa).

A run of 2 helical transmembrane segments spans residues 8-28 (ALIW…YVLV) and 61-81 (IALM…PTSV). Positions 90-295 (TVVLVMDVSL…EELTAVYDTL (206 aa)) constitute a VWFA domain. The helical transmembrane segment at 310–330 (RPWLLLGMLVVAAGIVTGLLY) threads the bilayer.

The protein belongs to the UPF0353 family.

The protein resides in the cell membrane. The protein is UPF0353 protein NFA_34780 of Nocardia farcinica (strain IFM 10152).